We begin with the raw amino-acid sequence, 2092 residues long: Nonribosomal peptide synthetase echPS (2092 aa).

The segment at F13–R406 is adenylation 1. The Carrier 1 domain maps to S524–T600. Residue S561 is modified to O-(pantetheine 4'-phosphoryl)serine. The disordered stretch occupies residues S596–T626. The segment covering D605–P624 has biased composition (polar residues). Positions P624–D1017 are condensation 1. The segment at A1068–R1446 is adenylation 2. Positions I1544–Q1622 constitute a Carrier 2 domain. At S1582 the chain carries O-(pantetheine 4'-phosphoryl)serine. Positions S1663–I2047 are condensation 2.

It belongs to the NRP synthetase family. It depends on pantetheine 4'-phosphate as a cofactor.

The catalysed reaction is L-tryptophan + L-alanine + 2 ATP = cyclo(L-tryptophyl-L-alanyl) + 2 ADP + 2 phosphate + 2 H(+). Its pathway is secondary metabolite biosynthesis. It functions in the pathway alkaloid biosynthesis. Its function is as follows. Nonribosomal peptide synthetase; part of the gene cluster that mediates the biosynthesis of echinulin family alkaloid. The pathway begins with the biosynthesis of the cyclic dipeptide cyclo-L-Trp-L-Ala (cyclo-TA) by the NRPS echPS via condensation of L-alanine and L-tryptophan. The prenyltransferase echPT1 then catalyzes the first prenylation step, a reverse prenylation reaction at C2, to yield preechinulin. Preechinulin is the substrate of the cytochrome P450 monooxygenase echP450 that catalyzes the formation of the double bond between C10 and C11 to produce neoechulin A. The unique prenyltransferase echPT2 functions as a competitive enzyme with echP450 for preechinulin metabolization and uses preechinulin for effective regiospecific prenylations. Preechinulin is prenylated by echPT2 at C5 or C7. C7-prenylation leads to accumulation of tardioxopiperazine B without further modification by echPT2. In contrast, the C5-prenylated tardioxopiperazine A can be prenylated again by echPT2, predominantly at C7 to form echinulin or less frequently at C4 to give variecolorin L. EchPT2 also accepts neoechilunin A to produce varlecolorin G (prenylation at C5) or isoechinulin A (prenylation at C7). EchPT2 further converts isoechinulin A into dehydroechinulin. Moreover, a yet unidentified enzyme can also convert neoechilunin A into neoechilunin B by introducing a double bond between positions C14 and C17 and thus provides a further substrate to echPT2 for C5 and C7 prenylation. This is Nonribosomal peptide synthetase echPS from Aspergillus ruber (strain CBS 135680).